The primary structure comprises 425 residues: Glutamyl-tRNA reductase (425 aa).

Residues 49 to 52, serine 107, 112 to 114, and glutamine 118 each bind substrate; these read TCNR and EPQ. Cysteine 50 functions as the Nucleophile in the catalytic mechanism. NADP(+) is bound at residue 187–192; it reads GAGETI.

Belongs to the glutamyl-tRNA reductase family. Homodimer.

It carries out the reaction (S)-4-amino-5-oxopentanoate + tRNA(Glu) + NADP(+) = L-glutamyl-tRNA(Glu) + NADPH + H(+). Its pathway is porphyrin-containing compound metabolism; protoporphyrin-IX biosynthesis; 5-aminolevulinate from L-glutamyl-tRNA(Glu): step 1/2. In terms of biological role, catalyzes the NADPH-dependent reduction of glutamyl-tRNA(Glu) to glutamate 1-semialdehyde (GSA). The sequence is that of Glutamyl-tRNA reductase from Pseudomonas savastanoi pv. phaseolicola (strain 1448A / Race 6) (Pseudomonas syringae pv. phaseolicola (strain 1448A / Race 6)).